Reading from the N-terminus, the 491-residue chain is MCNTNMSVPTDGAVTTSQIPASEQETLVRPKPLLLKLLKSVGAQKDTYTMKEVLFYLGQYIMTKRLYDEKQQHIVYCSNDLLGDLFGVPSFSVKEHRKIYTMIYRNLVVVNQQESSDSGTSVSENRCHLEGGSDQKDLVQELQEEKPSSSHLVSRPSTSSRRRAISETEENSDELSGERQRKRHKSDSISLSFDESLALCVIREICCERSSSSESTGTPSNPDLDAGVSEHSGDWLDQDSVSDQFSVEFEVESLDSEDYSLSEEGQELSDEDDEVYQVTVYQAGESDTDSFEEDPEISLADYWKCTSCNEMNPPLPSHCNRCWALRENWLPEDKGKDKGEISEKAKLENSTQAEEGFDVPDCKKTIVNDSRESCVEENDDKITQASQSQESEDYSQPSTSSSIIYSSQEDVKEFEREETQDKEESVESSLPLNAIEPCVICQGRPKNGCIVHGKTGHLMACFTCAKKLKKRNKPCPVCRQPIQMIVLTYFP.

Residues 1-101 form a sufficient to promote the mitochondrial pathway of apoptosis region; it reads MCNTNMSVPT…SVKEHRKIYT (101 aa). The interval 1–110 is necessary for interaction with USP2; it reads MCNTNMSVPT…TMIYRNLVVV (110 aa). Positions 26 to 109 constitute an SWIB/MDM2 domain; that stretch reads TLVRPKPLLL…YTMIYRNLVV (84 aa). The interval 141 to 187 is disordered; it reads ELQEEKPSSSHLVSRPSTSSRRRAISETEENSDELSGERQRKRHKSD. Residues 149–159 are compositionally biased toward polar residues; sequence SSHLVSRPSTS. Residues 150-230 form an interaction with PYHIN1 and necessary for interaction with RFFL and RNF34 region; sequence SHLVSRPSTS…NPDLDAGVSE (81 aa). Residue S166 is modified to Phosphoserine; by SGK1. An interaction with MTBP region spans residues 170–306; the sequence is ENSDELSGER…ISLADYWKCT (137 aa). The Nuclear localization signal signature appears at 179–185; it reads RQRKRHK. S190 is subject to Phosphoserine. The Nuclear export signal signature appears at 190–202; sequence SLSFDESLALCVI. The segment at 210-304 is ARF-binding; sequence SSSSESTGTP…PEISLADYWK (95 aa). The interval 211–237 is disordered; the sequence is SSSESTGTPSNPDLDAGVSEHSGDWLD. Residues 223–232 form an interaction with USP7 region; sequence DLDAGVSEHS. S240, S242, S246, S260, and S262 each carry phosphoserine. Residues 242 to 331 are region II; sequence SDQFSVEFEV…CWALRENWLP (90 aa). The interval 253–274 is disordered; it reads SLDSEDYSLSEEGQELSDEDDE. Positions 276–491 are necessary for interaction with USP2; the sequence is YQVTVYQAGE…IQMIVLTYFP (216 aa). Residues 299-328 form a RanBP2-type zinc finger; it reads LADYWKCTSCNEMNPPLPSHCNRCWALREN. 4 residues coordinate Zn(2+): C305, C308, C319, and C322. The interval 371–427 is disordered; that stretch reads RESCVEENDDKITQASQSQESEDYSQPSTSSSIIYSSQEDVKEFEREETQDKEESVE. Phosphoserine; by ATM is present on residues S386, S395, and S407. Low complexity predominate over residues 394-408; that stretch reads YSQPSTSSSIIYSSQ. A compositionally biased stretch (basic and acidic residues) spans 409–425; that stretch reads EDVKEFEREETQDKEES. T419 bears the Phosphothreonine; by ATM mark. S425 and S429 each carry phosphoserine; by ATM. The segment at 438 to 479 adopts an RING-type zinc-finger fold; sequence CVICQGRPKNGCIVHGKTGHLMACFTCAKKLKKRNKPCPVCR. Positions 466 to 473 match the Nucleolar localization signal motif; it reads KKLKKRNK.

Belongs to the MDM2/MDM4 family. As to quaternary structure, interacts with p53/TP53, TP73/p73, RBL5 and RP11. Binds specifically to RNA. Can interact with RB1, E1A-associated protein EP300 and the E2F1 transcription factor. Forms a ternary complex with p53/TP53 and WWOX. Interacts with CDKN2AIP, RFWD3, USP7, PYHIN1, and RBBP6. Interacts with ARRB1 and ARRB2. Interacts with PSMA3. Found in a trimeric complex with MDM2, MDM4 and USP2. Interacts with USP2 (via N-terminus and C-terminus). Interacts with MDM4. Part of a complex with MDM2, DAXX, RASSF1 and USP7. Part of a complex with DAXX, MDM2 and USP7. Interacts directly with DAXX and USP7. Interacts (via C-terminus) with RASSF1 isoform A (via N-terminus); the interaction is independent of TP53. Interacts with APEX1; leading to its ubiquitination and degradation. Interacts with RYBP; this inhibits ubiquitination of TP53. Identified in a complex with RYBP and p53/TP53. Also a component of the TRIM28/KAP1-MDM2-p53/TP53 complex involved in regulating p53/TP53 stabilization and activity. Binds directly both p53/TP53 and TRIM28. Component of the TRIM28/KAP1-ERBB4-MDM2 complex involved in connecting growth factor responses with DNA damage. Interacts directly with both TRIM28 and ERBB4 in the complex. Interacts with DYRK2. Interacts with IGF1R. Interacts with TRIM13; the interaction ubiquitinates MDM2 leading to its proteasomal degradation. Interacts with SNAI1; this interaction promotes SNAI1 ubiquitination. Interacts with NOTCH1 (via intracellular domain). Interacts with FHIT. Interacts with RFFL and RNF34; the interaction stabilizes MDM2. Interacts with CDK5RAP3 and CDKN2A/ARF; form a ternary complex involved in regulation of p53/TP53. Interacts with MTA1. Interacts with AARB2. Interacts with MTBP. Interacts with PML. Interacts with TBRG1. Interacts (via its RanBP2-type zinc finger domain) with RPL11 in the 5S RNP complex composed of 5S RNA, RPL5 and RPL11; this interaction occurs in the nucleoplasm and negatively regulates MDM2-mediated TP53 ubiquitination and degradation. Interacts with ADGRB1; the interaction results in inhibition of MDM2-mediated ubiquitination and degradation of DLG4/PSD95, promoting DLG4 stability and regulating synaptic plasticity. Interacts with RPL23A; this interaction may promote p53/TP53 polyubiquitination. Interacts with NDUFS1. Interacts with MORN3; the interaction enhances the ubiquitination of p53/TP53. (Microbial infection) Interacts with herpes virus 8 protein v-IRF4. In terms of assembly, (Microbial infection) Interacts with and ubiquitinates HIV-1 Tat. Post-translationally, phosphorylation on Ser-166 by SGK1 activates ubiquitination of p53/TP53. Phosphorylated at multiple sites near the RING domain by ATM upon DNA damage; this promotes its ubiquitination and degradation, preventing p53/TP53 degradation. In terms of processing, autoubiquitination leads to proteasomal degradation; resulting in p53/TP53 activation it may be regulated by SFN. Also ubiquitinated by TRIM13. ATM-phosphorylated MDM2 is ubiquitinated by the SCF(FBXO31) complex in response to genotoxic stress, promoting its degradation and p53/TP53-mediated DNA damage response. Deubiquitinated by USP2 leads to its accumulation and increases deubiquitination and degradation of p53/TP53. Deubiquitinated by USP7 leading to its stabilization. As to expression, ubiquitous. Isoform Mdm2-A, isoform Mdm2-B, isoform Mdm2-C, isoform Mdm2-D, isoform Mdm2-E, isoform Mdm2-F and isoform Mdm2-G are observed in a range of cancers but absent in normal tissues.

It is found in the nucleus. The protein localises to the nucleoplasm. The protein resides in the cytoplasm. It localises to the nucleolus. The catalysed reaction is S-ubiquitinyl-[E2 ubiquitin-conjugating enzyme]-L-cysteine + [acceptor protein]-L-lysine = [E2 ubiquitin-conjugating enzyme]-L-cysteine + N(6)-ubiquitinyl-[acceptor protein]-L-lysine.. In terms of biological role, E3 ubiquitin-protein ligase that mediates ubiquitination of p53/TP53, leading to its degradation by the proteasome. Inhibits p53/TP53- and p73/TP73-mediated cell cycle arrest and apoptosis by binding its transcriptional activation domain. Also acts as a ubiquitin ligase E3 toward itself and ARRB1. Permits the nuclear export of p53/TP53. Promotes proteasome-dependent ubiquitin-independent degradation of retinoblastoma RB1 protein. Inhibits DAXX-mediated apoptosis by inducing its ubiquitination and degradation. Component of the TRIM28/KAP1-MDM2-p53/TP53 complex involved in stabilizing p53/TP53. Also a component of the TRIM28/KAP1-ERBB4-MDM2 complex which links growth factor and DNA damage response pathways. Mediates ubiquitination and subsequent proteasome degradation of DYRK2 in nucleus. Ubiquitinates IGF1R and SNAI1 and promotes them to proteasomal degradation. Ubiquitinates DCX, leading to DCX degradation and reduction of the dendritic spine density of olfactory bulb granule cells. Ubiquitinates DLG4, leading to proteasomal degradation of DLG4 which is required for AMPA receptor endocytosis. Negatively regulates NDUFS1, leading to decreased mitochondrial respiration, marked oxidative stress, and commitment to the mitochondrial pathway of apoptosis. Binds NDUFS1 leading to its cytosolic retention rather than mitochondrial localization resulting in decreased supercomplex assembly (interactions between complex I and complex III), decreased complex I activity, ROS production, and apoptosis. This Homo sapiens (Human) protein is E3 ubiquitin-protein ligase Mdm2 (MDM2).